Reading from the N-terminus, the 238-residue chain is Thiamine import ATP-binding protein ThiQ (238 aa).

In terms of domain architecture, ABC transporter spans M1–L234. ATP is bound at residue G36–S43.

This sequence belongs to the ABC transporter superfamily. Thiamine importer (TC 3.A.1.19.1) family. As to quaternary structure, the complex is composed of two ATP-binding proteins (ThiQ), two transmembrane proteins (ThiP) and a solute-binding protein (ThiB).

The protein localises to the cell inner membrane. The enzyme catalyses thiamine(out) + ATP + H2O = thiamine(in) + ADP + phosphate + H(+). Functionally, part of the ABC transporter complex ThiBPQ involved in thiamine import. Responsible for energy coupling to the transport system. The polypeptide is Thiamine import ATP-binding protein ThiQ (Rhizobium meliloti (strain 1021) (Ensifer meliloti)).